A 37-amino-acid polypeptide reads, in one-letter code: Bactericidin B-3 (37 aa).

Gly-37 is modified (glycine amide).

It belongs to the cecropin family.

It is found in the secreted. Functionally, cecropins have lytic and antibacterial activity against several Gram-positive and Gram-negative bacteria. In Manduca sexta (Tobacco hawkmoth), this protein is Bactericidin B-3.